The chain runs to 332 residues: Glycerol-3-phosphate dehydrogenase [NAD(P)+] (332 aa).

Ser11, Phe12, Lys32, and Lys106 together coordinate NADPH. The sn-glycerol 3-phosphate site is built by Lys106, Gly137, and Ser139. Ala141 contributes to the NADPH binding site. Sn-glycerol 3-phosphate-binding residues include Lys192, Asp245, Ser255, Arg256, and Asn257. The Proton acceptor role is filled by Lys192. Arg256 contributes to the NADPH binding site. NADPH is bound by residues Val280 and Glu282.

The protein belongs to the NAD-dependent glycerol-3-phosphate dehydrogenase family.

Its subcellular location is the cytoplasm. The catalysed reaction is sn-glycerol 3-phosphate + NAD(+) = dihydroxyacetone phosphate + NADH + H(+). The enzyme catalyses sn-glycerol 3-phosphate + NADP(+) = dihydroxyacetone phosphate + NADPH + H(+). Its pathway is membrane lipid metabolism; glycerophospholipid metabolism. Catalyzes the reduction of the glycolytic intermediate dihydroxyacetone phosphate (DHAP) to sn-glycerol 3-phosphate (G3P), the key precursor for phospholipid synthesis. In Staphylococcus epidermidis (strain ATCC 12228 / FDA PCI 1200), this protein is Glycerol-3-phosphate dehydrogenase [NAD(P)+].